A 157-amino-acid chain; its full sequence is 6,7-dimethyl-8-ribityllumazine synthase (157 aa).

5-amino-6-(D-ribitylamino)uracil contacts are provided by residues F22, 56–58 (AFE), and 81–83 (VLI). 86-87 (ET) serves as a coordination point for (2S)-2-hydroxy-3-oxobutyl phosphate. H89 (proton donor) is an active-site residue. F114 is a binding site for 5-amino-6-(D-ribitylamino)uracil. Position 128 (R128) interacts with (2S)-2-hydroxy-3-oxobutyl phosphate.

This sequence belongs to the DMRL synthase family.

It carries out the reaction (2S)-2-hydroxy-3-oxobutyl phosphate + 5-amino-6-(D-ribitylamino)uracil = 6,7-dimethyl-8-(1-D-ribityl)lumazine + phosphate + 2 H2O + H(+). Its pathway is cofactor biosynthesis; riboflavin biosynthesis; riboflavin from 2-hydroxy-3-oxobutyl phosphate and 5-amino-6-(D-ribitylamino)uracil: step 1/2. Functionally, catalyzes the formation of 6,7-dimethyl-8-ribityllumazine by condensation of 5-amino-6-(D-ribitylamino)uracil with 3,4-dihydroxy-2-butanone 4-phosphate. This is the penultimate step in the biosynthesis of riboflavin. The sequence is that of 6,7-dimethyl-8-ribityllumazine synthase from Chlamydia trachomatis serovar L2 (strain ATCC VR-902B / DSM 19102 / 434/Bu).